The following is a 463-amino-acid chain: MKAWHWSVTLVVIYLAIPVILYLLTRKDDRKPLSDIRKRKRTIVLVLGDLGRSPRMLYHARSLARSGHKVDLCGYDGAKPFDEILNNDLIKIHHIPLILNTRKLPFVVFGILKVIRQHWLLISLLYKLRGADYLLVQNPPSIPTLGVVRFYNLFLSTRTKVVLDWHNFGYTILALKLPETHPMVKFAKFYEGFFGGRAFVHLCVTVLMGQAMRKTFGMSGRRIVPLHDRPAFHFKPLSESEKLDVLRDFKETLYDDMTADHKIIVSSTSYTPDENFNILLDALALYDESKLDLPPLRVIITGKGPMMPEFLAKVEKLQLKRVSIRTAWLEFADYPRILGAAHLGVSLHESSSGYDLPMKVVDMFGCGIPVVSVDYAALSELVKTNTNGVAVKGHVEMGNTFMSLFSNRGKLDNIKRGAMIESRNTWDQTWVKTVGPLFDIGEYVQQRPDEDYDFSSSSSDDDH.

The Lumenal segment spans residues 1–3; it reads MKA. A helical transmembrane segment spans residues 4 to 24; the sequence is WHWSVTLVVIYLAIPVILYLL. Topologically, residues 25–105 are cytoplasmic; the sequence is TRKDDRKPLS…PLILNTRKLP (81 aa). Residues 106–126 constitute an intramembrane region (helical); that stretch reads FVVFGILKVIRQHWLLISLLY. Residues 127–463 lie on the Lumenal side of the membrane; that stretch reads KLRGADYLLV…FSSSSSDDDH (337 aa).

The protein belongs to the glycosyltransferase group 1 family.

It localises to the endoplasmic reticulum membrane. It carries out the reaction an N,N'-diacetylchitobiosyl-diphospho-di-trans,poly-cis-dolichol + GDP-alpha-D-mannose = a beta-D-Man-(1-&gt;4)-beta-D-GlcNAc-(1-&gt;4)-alpha-D-GlcNAc-diphospho-di-trans,poly-cis-dolichol + GDP + H(+). It functions in the pathway protein modification; protein glycosylation. Functionally, participates in the formation of the lipid-linked precursor oligosaccharide for N-glycosylation. Involved in assembling the dolichol-pyrophosphate-GlcNAc(2)-Man(5) intermediate on the cytoplasmic surface of the ER. This Yarrowia lipolytica (strain CLIB 122 / E 150) (Yeast) protein is Chitobiosyldiphosphodolichol beta-mannosyltransferase (ALG1).